A 508-amino-acid polypeptide reads, in one-letter code: Photosystem II CP47 reaction center protein (508 aa).

Transmembrane regions (helical) follow at residues 21–36 (SVHI…WAGS), 101–115 (IVFS…IWHW), 140–156 (GIHL…FGAF), 203–218 (IAAG…FHLS), 237–252 (VLSS…AFVV), and 457–472 (SFAL…HGAR).

Belongs to the PsbB/PsbC family. PsbB subfamily. PSII is composed of 1 copy each of membrane proteins PsbA, PsbB, PsbC, PsbD, PsbE, PsbF, PsbH, PsbI, PsbJ, PsbK, PsbL, PsbM, PsbT, PsbX, PsbY, PsbZ, Psb30/Ycf12, at least 3 peripheral proteins of the oxygen-evolving complex and a large number of cofactors. It forms dimeric complexes. Requires Binds multiple chlorophylls. PSII binds additional chlorophylls, carotenoids and specific lipids. as cofactor.

It localises to the plastid. The protein localises to the chloroplast thylakoid membrane. Its function is as follows. One of the components of the core complex of photosystem II (PSII). It binds chlorophyll and helps catalyze the primary light-induced photochemical processes of PSII. PSII is a light-driven water:plastoquinone oxidoreductase, using light energy to abstract electrons from H(2)O, generating O(2) and a proton gradient subsequently used for ATP formation. In Dioscorea elephantipes (Elephant's foot yam), this protein is Photosystem II CP47 reaction center protein.